We begin with the raw amino-acid sequence, 394 residues long: Flap endonuclease 1-A (394 aa).

The tract at residues 1 to 105 (MGIKGLTGLL…GVLSKRLERR (105 aa)) is N-domain. Position 34 (Asp34) interacts with Mg(2+). Residues Arg47 and Arg71 each contribute to the DNA site. Positions 87, 159, 161, 180, and 182 each coordinate Mg(2+). Positions 123-254 (DVDRFSRRTV…KSALKLIREY (132 aa)) are I-domain. Glu159 serves as a coordination point for DNA. The DNA site is built by Gly232 and Asp234. Position 234 (Asp234) interacts with Mg(2+). Positions 341 to 349 (QQGRLDGFF) are interaction with PCNA. The segment at 356–375 (KAAAPAPVGKAKGKGKVDAK) is disordered.

The protein belongs to the XPG/RAD2 endonuclease family. FEN1 subfamily. In terms of assembly, interacts with PCNA. Three molecules of FEN1 bind to one PCNA trimer with each molecule binding to one PCNA monomer. PCNA stimulates the nuclease activity without altering cleavage specificity. It depends on Mg(2+) as a cofactor. Phosphorylated. Phosphorylation upon DNA damage induces relocalization to the nuclear plasma.

It localises to the nucleus. The protein localises to the nucleolus. Its subcellular location is the nucleoplasm. It is found in the mitochondrion. Structure-specific nuclease with 5'-flap endonuclease and 5'-3' exonuclease activities involved in DNA replication and repair. During DNA replication, cleaves the 5'-overhanging flap structure that is generated by displacement synthesis when DNA polymerase encounters the 5'-end of a downstream Okazaki fragment. It enters the flap from the 5'-end and then tracks to cleave the flap base, leaving a nick for ligation. Also involved in the long patch base excision repair (LP-BER) pathway, by cleaving within the apurinic/apyrimidinic (AP) site-terminated flap. Acts as a genome stabilization factor that prevents flaps from equilibrating into structures that lead to duplications and deletions. Also possesses 5'-3' exonuclease activity on nicked or gapped double-stranded DNA, and exhibits RNase H activity. Also involved in replication and repair of rDNA and in repairing mitochondrial DNA. The protein is Flap endonuclease 1-A of Laccaria bicolor (strain S238N-H82 / ATCC MYA-4686) (Bicoloured deceiver).